Here is a 955-residue protein sequence, read N- to C-terminus: UPF0182 protein PMT_0755 (955 aa).

9 helical membrane passes run 25 to 45 (LLLS…WLWF), 58 to 78 (WLWQ…CQLW), 107 to 127 (LLGC…LAWL), 146 to 166 (IWAL…MLGN), 178 to 198 (CFCF…ALAI), 214 to 234 (FGLG…AQLI), 264 to 284 (CNFL…LLWL), 313 to 333 (SLAS…TWIQ), and 340 to 360 (LIAS…APFV).

Belongs to the UPF0182 family.

It is found in the cell membrane. This Prochlorococcus marinus (strain MIT 9313) protein is UPF0182 protein PMT_0755.